We begin with the raw amino-acid sequence, 507 residues long: Maturase K (507 aa).

It belongs to the intron maturase 2 family. MatK subfamily.

The protein localises to the plastid. Its subcellular location is the chloroplast. Its function is as follows. Usually encoded in the trnK tRNA gene intron. Probably assists in splicing its own and other chloroplast group II introns. This is Maturase K from Asimina triloba (Pawpaw).